The primary structure comprises 331 residues: L-lactate dehydrogenase A chain (331 aa).

Residues 29–57 (GMVG…MEDK) and Arg-98 contribute to the NAD(+) site. Residues Arg-105, Asn-137, and Arg-168 each contribute to the substrate site. Asn-137 is a binding site for NAD(+). The Proton acceptor role is filled by His-192. Thr-247 contributes to the substrate binding site.

Belongs to the LDH/MDH superfamily. LDH family. Homotetramer.

The protein localises to the cytoplasm. It catalyses the reaction (S)-lactate + NAD(+) = pyruvate + NADH + H(+). Its pathway is fermentation; pyruvate fermentation to lactate; (S)-lactate from pyruvate: step 1/1. Its function is as follows. Interconverts simultaneously and stereospecifically pyruvate and lactate with concomitant interconversion of NADH and NAD(+). In Dissostichus eleginoides (Patagonian toothfish), this protein is L-lactate dehydrogenase A chain (ldha).